Reading from the N-terminus, the 87-residue chain is Small ribosomal subunit protein bS20 (87 aa).

Residues 1–21 form a disordered region; sequence MANIKQQIKRNKTNEKRRLKN. Residues 7 to 20 are compositionally biased toward basic residues; the sequence is QIKRNKTNEKRRLK.

This sequence belongs to the bacterial ribosomal protein bS20 family.

Binds directly to 16S ribosomal RNA. In Phytoplasma mali (strain AT), this protein is Small ribosomal subunit protein bS20.